The following is a 227-amino-acid chain: Probable cell wall protein PGA42 (227 aa).

Positions 1-16 are cleaved as a signal peptide; the sequence is MKFIILLFALIHITVA. A glycan (N-linked (GlcNAc...) asparagine) is linked at Asn192. Ser200 carries the GPI-anchor amidated serine lipid modification. The propeptide at 201-227 is removed in mature form; sequence GSQIFVLCVISVVGFIFFFLFFLSLFV.

Belongs to the IHD1 family. Post-translationally, the GPI-anchor is attached to the protein in the endoplasmic reticulum and serves to target the protein to the cell surface. There, the glucosamine-inositol phospholipid moiety is cleaved off and the GPI-modified mannoprotein is covalently attached via its lipidless GPI glycan remnant to the 1,6-beta-glucan of the outer cell wall layer.

It localises to the secreted. Its subcellular location is the cell wall. The protein localises to the membrane. Probable GPI-anchored cell wall protein that may be involved in cell wall organization, hyphal growth, as well as in virulence. In Candida albicans (strain SC5314 / ATCC MYA-2876) (Yeast), this protein is Probable cell wall protein PGA42 (PGA42).